Reading from the N-terminus, the 251-residue chain is uncharacterized protein (251 aa).

6 residues coordinate a divalent metal cation: His-5, His-7, Glu-101, His-132, His-163, and Asp-209.

Belongs to the metallo-dependent hydrolases superfamily. TatD-type hydrolase family. Requires a divalent metal cation as cofactor.

This is an uncharacterized protein from Methanocaldococcus jannaschii (strain ATCC 43067 / DSM 2661 / JAL-1 / JCM 10045 / NBRC 100440) (Methanococcus jannaschii).